The primary structure comprises 192 residues: Ras-like GTP-binding protein Rho1 (192 aa).

Position 12 to 19 (12 to 19 (GDGACGKT)) interacts with GTP. Positions 34-42 (YVPTVFENY) match the Effector region motif. Residues 59-63 (DTAGQ) and 117-120 (NKKD) contribute to the GTP site. Cysteine methyl ester is present on Cys-189. Cys-189 carries S-geranylgeranyl cysteine lipidation. Residues 190–192 (LLL) constitute a propeptide, removed in mature form.

It belongs to the small GTPase superfamily. Rho family. In terms of assembly, interacts with capu. Interacts (via REM repeats) with Pkn (via N-terminus). Interacts (via N-terminus) with wash (via N-terminus). May interact with dia/diaphanous (via CBD/FH3 domain). In terms of tissue distribution, expressed in hemocytes (at protein level).

The protein resides in the cell membrane. It is found in the cytoplasm. The protein localises to the cytoskeleton. It localises to the apical cell membrane. Its subcellular location is the lateral cell membrane. Functionally, has a role in regulating actin cytoskeletal organization: required during early development for proper execution of morphogenetic movements of individual cells and groups of cells important for the formation of the embryonic body plan. Plays a role in regulating dorsal closure during embryogenesis. During axis elongation, required for Rho-kinase Rok planar polarity and adherens junction localization as well as for generating a planar polarized distribution of the actin-binding protein Shrm. During embryogenesis, acts upstream of wash to regulate the developmental migration of tail hemocytes anteriorly along the ventral midline. May have a role in eye development. Involved in targeted recruitment of dia/diaphanous to apical membranes of polarized epithelial cells. The polypeptide is Ras-like GTP-binding protein Rho1 (Drosophila melanogaster (Fruit fly)).